A 202-amino-acid polypeptide reads, in one-letter code: CASP-like protein 1U4 (202 aa).

The Cytoplasmic portion of the chain corresponds to 1-10 (MCLPAKWLHP). A helical membrane pass occupies residues 11–31 (VSLIFRVAGIGLAAVSAAAML). At 32–56 (TASQCTVYADYGWRPRTVTYSDFPA) the chain is on the extracellular side. Residues 57-77 (FVYLVAATAIATLLEAVALFL) traverse the membrane as a helical segment. At 78–94 (SWSKKGKSKKSWRVLTM) the chain is on the cytoplasmic side. A helical membrane pass occupies residues 95–115 (LLLGAVVPALLYTSAGAAFAV). The Extracellular portion of the chain corresponds to 116-146 (GWEDIYYYLEPIGRRFSVCRSSVAGGRFCEH). A helical transmembrane segment spans residues 147–167 (VHVSMWLALGAAVAVSFAEFL). At 168–202 (TTFRWCHGSGSCSDSDSDSDSDSESGCGHGCHCKH) the chain is on the cytoplasmic side.

Belongs to the Casparian strip membrane proteins (CASP) family. As to quaternary structure, homodimer and heterodimers.

It localises to the cell membrane. The polypeptide is CASP-like protein 1U4 (Sorghum bicolor (Sorghum)).